A 204-amino-acid polypeptide reads, in one-letter code: MLFGVKDIALLEHGCKALEVDSYKSLMILGIPEDCNHEEFEEIIRLPLKPLGKFEVAGKAYLEEDKSKAAIIQLTEDINYAVVPREIKGKGGVWRVVYMPRKQDIEFLTKLNLFLQSEGRTVEDMARVLRQELCPPATGPRELPARKCSVPGLGEKPEAGATVQMDVVPPLDSSEKESKAGVGKRGKRKNKKNRRRHHASDKKL.

Residues 135 to 204 (PPATGPRELP…RRHHASDKKL (70 aa)) form a disordered region. Positions 182–204 (VGKRGKRKNKKNRRRHHASDKKL) are enriched in basic residues.

It belongs to the PNMA family.

The chain is Paraneoplastic antigen-like protein 8C from Homo sapiens (Human).